The chain runs to 400 residues: Large envelope protein (400 aa).

Residue methionine 1 is modified to N-acetylmethionine. Disordered stretches follow at residues methionine 1 to phenylalanine 24 and threonine 86 to aspartate 114. Residue glycine 2 is the site of N-myristoyl glycine; by host attachment. The interval glycine 2–alanine 119 is pre-S1. The interval glycine 2–asparagine 174 is pre-S. At glycine 2–glycine 181 the chain is on the virion surface; in external conformation side. At glycine 2–arginine 253 the chain is on the intravirion; in internal conformation side. Residue tryptophan 4 is glycosylated (N-linked (GlcNAc...) asparagine). Over residues serine 96–threonine 106 the composition is skewed to polar residues. A pre-S2 region spans residues methionine 120 to asparagine 174. The helical transmembrane segment at leucine 182–isoleucine 202 threads the bilayer. The Intravirion; in external conformation portion of the chain corresponds to proline 203 to arginine 253. A helical transmembrane segment spans residues phenylalanine 254–tyrosine 274. Residues glutamine 275–serine 348 lie on the Virion surface side of the membrane. An N-linked (GlcNAc...) asparagine; by host glycan is attached at asparagine 320. The chain crosses the membrane as a helical span at residues leucine 349–isoleucine 369. Residues tryptophan 370 to tryptophan 375 lie on the Intravirion side of the membrane. Residues glycine 376–valine 398 traverse the membrane as a helical segment. Residues tyrosine 399 to isoleucine 400 are Virion surface-facing.

This sequence belongs to the orthohepadnavirus major surface antigen family. As to quaternary structure, interacts (via its myristoylated pre-S1 region) with the host SLC10A1/NTCP; this interaction is essential for viral entry. In its internal form (Li-HBsAg), interacts with the capsid protein and with the isoform S. Interacts with host chaperone CANX. In terms of assembly, associates with host chaperone CANX through its pre-S2 N glycan; this association may be essential for isoform M proper secretion. As to quaternary structure, interacts with isoform L. Interacts with the antigens of satellite virus HDV (HDVAgs); this interaction is required for encapsidation of HDV genomic RNA. In terms of processing, isoform M is N-terminally acetylated by host at a ratio of 90%, and N-glycosylated by host at the pre-S2 region. Post-translationally, myristoylated; this modification is essential for its interaction with the host protein SLC10A1/NTCP.

Its subcellular location is the virion membrane. In terms of biological role, the large envelope protein exists in two topological conformations, one which is termed 'external' or Le-HBsAg and the other 'internal' or Li-HBsAg. In its external conformation the protein attaches the virus to cell receptors and thereby initiating infection. This interaction determines the species specificity and liver tropism. This attachment induces virion internalization predominantly through caveolin-mediated endocytosis. The large envelope protein also assures fusion between virion membrane and endosomal membrane. In its internal conformation the protein plays a role in virion morphogenesis and mediates the contact with the nucleocapsid like a matrix protein. Its function is as follows. The middle envelope protein plays an important role in the budding of the virion. It is involved in the induction of budding in a nucleocapsid independent way. In this process the majority of envelope proteins bud to form subviral lipoprotein particles of 22 nm of diameter that do not contain a nucleocapsid. The protein is Large envelope protein of Hepatitis B virus genotype B2 subtype adw (isolate China/patient4/1996) (HBV-B).